Reading from the N-terminus, the 67-residue chain is Envelope small membrane protein (67 aa).

Residue G2 is the site of N-myristoyl glycine; by host attachment. An endoplasmic reticulum retention signal region spans residues 2–15 (GLVWSLISNSIQTI). Topologically, residues 2-27 (GLVWSLISNSIQTIIADFAISVIDAA) are virion surface. The helical transmembrane segment at 28 to 48 (LFFLMLLALAVVTVFLFWLIV) threads the bilayer. Residues 49 to 67 (AIGRSLVARCSRGARYRPV) are Intravirion-facing.

This sequence belongs to the arteriviridae E protein family. As to quaternary structure, homomultimer. Associates with itself into higher-order structures, including dimers, trimers and tetramers. Associates with the GP2b-GP3-GP4 complex. Post-translationally, myristoylated. Not glycosylated.

It localises to the virion membrane. The protein resides in the host endoplasmic reticulum membrane. The protein localises to the host Golgi apparatus membrane. It is found in the secreted. In terms of biological role, minor envelope protein. May function as a viroporin in the virion envelope that facilitates uncoating of the virus in order to release the genomic RNA into the cytoplasm for subsequent replication. This chain is Envelope small membrane protein (GP2a), found in Equidae (horses).